We begin with the raw amino-acid sequence, 299 residues long: Probable lipid kinase YegS-like (299 aa).

The region spanning 2–133 is the DAGKc domain; it reads SRSAGSFLIL…IDIAHVNDKT (132 aa). ATP is bound by residues Thr40, 66 to 72, and Thr95; that span reads GDGTINE. 3 residues coordinate Mg(2+): Leu215, Asp218, and Leu220. Glu271 functions as the Proton acceptor in the catalytic mechanism.

Belongs to the diacylglycerol/lipid kinase family. YegS lipid kinase subfamily. The cofactor is Mg(2+). Ca(2+) is required as a cofactor.

It localises to the cytoplasm. In terms of biological role, probably phosphorylates lipids; the in vivo substrate is unknown. The polypeptide is Probable lipid kinase YegS-like (Cronobacter sakazakii (strain ATCC BAA-894) (Enterobacter sakazakii)).